Reading from the N-terminus, the 469-residue chain is IAA-alanine resistance protein 1 (469 aa).

An N-terminal signal peptide occupies residues 1–28; that stretch reads MSFSLRKLLVPILVLVLFLDLCVESGFS. Positions 33-58 are disordered; the sequence is ARDDHVHHHGGGCSHSHDHDHDHDHD. Over residues 47-58 the composition is skewed to basic and acidic residues; that stretch reads HSHDHDHDHDHD. Transmembrane regions (helical) follow at residues 114-134 and 141-161; these read CSLL…IMFV and WFVD…AFLH. The segment at 170–197 is disordered; that stretch reads GHSHSNDHHENHDHHDHSHSDSPSHSHS. The span at 173–193 shows a compositional bias: basic and acidic residues; the sequence is HSNDHHENHDHHDHSHSDSPS. The helical transmembrane segment at 201-221 threads the bilayer; it reads LSVGLSVLAGIVVFLLVEKLV. Positions 228-315 are disordered; the sequence is SSGSNTWGHH…GKSDKPEQVE (88 aa). Basic residues predominate over residues 235–246; the sequence is GHHHHHHHAGSK. Over residues 247–256 the composition is skewed to basic and acidic residues; that stretch reads KLKDEGDHNN. Residues 257–279 are compositionally biased toward polar residues; that stretch reads LDQQSSSDAIVNSSEKVSGGSTD. Over residues 292–315 the composition is skewed to basic and acidic residues; sequence ATDKSDSGTEITSDGKSDKPEQVE. The next 3 helical transmembrane spans lie at 387-407, 415-435, and 448-468; these read LFFN…VLVW, SLIE…GVLA, and SACH…ISLI.

Belongs to the ZIP transporter (TC 2.A.5) family. KE4/Catsup subfamily.

It localises to the membrane. Its function is as follows. May participate in auxin metabolism or response. Probable transporter. In Arabidopsis thaliana (Mouse-ear cress), this protein is IAA-alanine resistance protein 1 (IAR1).